Reading from the N-terminus, the 418-residue chain is Light-independent protochlorophyllide reductase subunit N (418 aa).

Positions 17, 42, and 103 each coordinate [4Fe-4S] cluster.

The protein belongs to the BchN/ChlN family. Protochlorophyllide reductase is composed of three subunits; ChlL, ChlN and ChlB. Forms a heterotetramer of two ChlB and two ChlN subunits. Requires [4Fe-4S] cluster as cofactor.

It catalyses the reaction chlorophyllide a + oxidized 2[4Fe-4S]-[ferredoxin] + 2 ADP + 2 phosphate = protochlorophyllide a + reduced 2[4Fe-4S]-[ferredoxin] + 2 ATP + 2 H2O. Its pathway is porphyrin-containing compound metabolism; chlorophyll biosynthesis (light-independent). In terms of biological role, component of the dark-operative protochlorophyllide reductase (DPOR) that uses Mg-ATP and reduced ferredoxin to reduce ring D of protochlorophyllide (Pchlide) to form chlorophyllide a (Chlide). This reaction is light-independent. The NB-protein (ChlN-ChlB) is the catalytic component of the complex. This chain is Light-independent protochlorophyllide reductase subunit N, found in Prochlorococcus marinus (strain AS9601).